The primary structure comprises 382 residues: Na(+)/H(+) antiporter NhaA 2 (382 aa).

12 consecutive transmembrane segments (helical) span residues 7–27, 28–48, 52–72, 88–108, 118–138, 147–167, 170–190, 206–226, 254–274, 285–305, 325–345, and 356–376; these read AGGV…NSYL, SGFY…AFEI, LLLW…GLEV, VLPG…YASF, GWAI…SLFG, LFLL…IALF, HELS…LFVL, LVVW…GFVI, VAYF…LGGI, LGII…VCWL, GVCL…SLAF, and VKLG…LILT.

The protein belongs to the NhaA Na(+)/H(+) (TC 2.A.33) antiporter family.

The protein resides in the cell inner membrane. It carries out the reaction Na(+)(in) + 2 H(+)(out) = Na(+)(out) + 2 H(+)(in). Functionally, na(+)/H(+) antiporter that extrudes sodium in exchange for external protons. The chain is Na(+)/H(+) antiporter NhaA 2 from Saccharophagus degradans (strain 2-40 / ATCC 43961 / DSM 17024).